Consider the following 943-residue polypeptide: Isoleucine--tRNA ligase (943 aa).

The 'HIGH' region signature appears at 58 to 68 (PYANGKIHIGH). E567 is an L-isoleucyl-5'-AMP binding site. A 'KMSKS' region motif is present at residues 608–612 (KMSKS). K611 serves as a coordination point for ATP. Positions 906, 909, 926, and 929 each coordinate Zn(2+).

The protein belongs to the class-I aminoacyl-tRNA synthetase family. IleS type 1 subfamily. In terms of assembly, monomer. Zn(2+) serves as cofactor.

The protein resides in the cytoplasm. The enzyme catalyses tRNA(Ile) + L-isoleucine + ATP = L-isoleucyl-tRNA(Ile) + AMP + diphosphate. Catalyzes the attachment of isoleucine to tRNA(Ile). As IleRS can inadvertently accommodate and process structurally similar amino acids such as valine, to avoid such errors it has two additional distinct tRNA(Ile)-dependent editing activities. One activity is designated as 'pretransfer' editing and involves the hydrolysis of activated Val-AMP. The other activity is designated 'posttransfer' editing and involves deacylation of mischarged Val-tRNA(Ile). This is Isoleucine--tRNA ligase from Pseudomonas entomophila (strain L48).